The sequence spans 304 residues: Glutaminase (304 aa).

Substrate-binding residues include Ser61, Asn113, Glu158, Asn165, Tyr189, Tyr240, and Val258.

The protein belongs to the glutaminase family. In terms of assembly, homotetramer.

It carries out the reaction L-glutamine + H2O = L-glutamate + NH4(+). The sequence is that of Glutaminase from Fusobacterium nucleatum subsp. nucleatum (strain ATCC 25586 / DSM 15643 / BCRC 10681 / CIP 101130 / JCM 8532 / KCTC 2640 / LMG 13131 / VPI 4355).